The following is a 174-amino-acid chain: Large ribosomal subunit protein uL10 (174 aa).

The protein belongs to the universal ribosomal protein uL10 family. In terms of assembly, part of the ribosomal stalk of the 50S ribosomal subunit. The N-terminus interacts with L11 and the large rRNA to form the base of the stalk. The C-terminus forms an elongated spine to which L12 dimers bind in a sequential fashion forming a multimeric L10(L12)X complex.

In terms of biological role, forms part of the ribosomal stalk, playing a central role in the interaction of the ribosome with GTP-bound translation factors. The protein is Large ribosomal subunit protein uL10 of Nitrosospira multiformis (strain ATCC 25196 / NCIMB 11849 / C 71).